Reading from the N-terminus, the 257-residue chain is 5'-nucleotidase SurE (257 aa).

Positions 8, 9, 40, and 93 each coordinate a divalent metal cation.

Belongs to the SurE nucleotidase family. A divalent metal cation serves as cofactor.

It localises to the cytoplasm. It catalyses the reaction a ribonucleoside 5'-phosphate + H2O = a ribonucleoside + phosphate. Its function is as follows. Nucleotidase that shows phosphatase activity on nucleoside 5'-monophosphates. This is 5'-nucleotidase SurE from Phenylobacterium zucineum (strain HLK1).